A 389-amino-acid chain; its full sequence is Type 2 DNA topoisomerase 6 subunit A (389 aa).

A Topo IIA-type catalytic domain is found at 12–162; the sequence is EARRKAANIL…MLILSKEKGK (151 aa). Tyr106 serves as the catalytic O-(5'-phospho-DNA)-tyrosine intermediate. Mg(2+) is bound by residues Glu209 and Asp261.

The protein belongs to the TOP6A family. In terms of assembly, homodimer. Heterotetramer of two Top6A and two Top6B chains. Requires Mg(2+) as cofactor.

It carries out the reaction ATP-dependent breakage, passage and rejoining of double-stranded DNA.. Not inhibited by the DNA gyrase inhibitor novobiocin, instead inhibited by eukaryotic topoisomerase inhibitors such as m- and o-amsacrine, ellipticine, and the quinolone CP-115,953. Its function is as follows. Relaxes both positive and negative supercoils and exhibits a strong decatenase and unknotting activity; it cannot introduce DNA supercoils. ATP is absolutely required for DNA cleavage; the nonhydrolyzable analog AMP-PNP generates nicked or linear products from a supercoiled dsDNA substrate. Generates staggered two-nucleotide long 5' overhangs. The enzyme is covalently attached transiently to the 5'-ends of the cleaved strands. This chain is Type 2 DNA topoisomerase 6 subunit A, found in Saccharolobus shibatae (strain ATCC 51178 / DSM 5389 / JCM 8931 / NBRC 15437 / B12) (Sulfolobus shibatae).